We begin with the raw amino-acid sequence, 133 residues long: P2Y purinoceptor 2 (133 aa).

The Cytoplasmic portion of the chain corresponds to 1-26 (ISVHRCLGVLRPLHSLRWGRARYARR). A helical membrane pass occupies residues 27–47 (VAFAVWVLVLYCQAPVLYFVT). The Extracellular segment spans residues 48-74 (TSTRSSRIICHDTSARELFSHFVAYSS). The chain crosses the membrane as a helical span at residues 75–95 (VMLSLLFAAPFAVILVCYVLM). Topologically, residues 96–116 (ARRLLKPAYGTSGGLPRAKRK) are cytoplasmic. The chain crosses the membrane as a helical span at residues 117 to 133 (SVRTIAIVLTVFVLCFL).

Belongs to the G-protein coupled receptor 1 family.

It is found in the cell membrane. In terms of biological role, receptor for ATP and UTP coupled to G-proteins that activate a phosphatidylinositol-calcium second messenger system. The protein is P2Y purinoceptor 2 (P2RY2) of Bos taurus (Bovine).